The chain runs to 118 residues: Ribonuclease P protein component (118 aa).

Belongs to the RnpA family. Consists of a catalytic RNA component (M1 or rnpB) and a protein subunit.

It carries out the reaction Endonucleolytic cleavage of RNA, removing 5'-extranucleotides from tRNA precursor.. RNaseP catalyzes the removal of the 5'-leader sequence from pre-tRNA to produce the mature 5'-terminus. It can also cleave other RNA substrates such as 4.5S RNA. The protein component plays an auxiliary but essential role in vivo by binding to the 5'-leader sequence and broadening the substrate specificity of the ribozyme. The protein is Ribonuclease P protein component of Shewanella frigidimarina (strain NCIMB 400).